The primary structure comprises 96 residues: Mapk-regulated corepressor-interacting protein 1 (96 aa).

Disordered regions lie at residues 1-28 (MASS…GSEI) and 76-96 (AFKP…AKKS). The PXDLS motif signature appears at 79 to 83 (PVDLS). Residues 81 to 96 (DLSDLKRRNTQDAKKS) show a composition bias toward basic and acidic residues.

Belongs to the MCRIP family.

It is found in the nucleus. Its subcellular location is the cytoplasm. It localises to the stress granule. In terms of biological role, may play a role in the regulation of the epithelial-mesenchymal transition. The sequence is that of Mapk-regulated corepressor-interacting protein 1 (MCRIP1) from Gallus gallus (Chicken).